The sequence spans 312 residues: Homoserine O-succinyltransferase (312 aa).

The active-site Acyl-thioester intermediate is the Cys142. The substrate site is built by Lys163 and Ser192. His235 functions as the Proton acceptor in the catalytic mechanism. Residue Glu237 is part of the active site. Arg249 provides a ligand contact to substrate.

The protein belongs to the MetA family.

It localises to the cytoplasm. The enzyme catalyses L-homoserine + succinyl-CoA = O-succinyl-L-homoserine + CoA. The protein operates within amino-acid biosynthesis; L-methionine biosynthesis via de novo pathway; O-succinyl-L-homoserine from L-homoserine: step 1/1. Functionally, transfers a succinyl group from succinyl-CoA to L-homoserine, forming succinyl-L-homoserine. The polypeptide is Homoserine O-succinyltransferase (Aliivibrio salmonicida (strain LFI1238) (Vibrio salmonicida (strain LFI1238))).